A 1279-amino-acid chain; its full sequence is Mediator of DNA damage checkpoint protein 1 (1279 aa).

Residues 1 to 22 form a disordered region; the sequence is MENTQVIDWDAEEEEETEISSG. An interaction with CHEK2 region spans residues 1–150; that stretch reads MENTQVIDWD…PRSLLTIEKT (150 aa). An interaction with the MRN complex region spans residues 2–222; sequence ENTQVIDWDA…SSPFGLGSDT (221 aa). Thr-4 is subject to Phosphothreonine. A compositionally biased stretch (acidic residues) spans 9–18; sequence WDAEEEEETE. Residues 54-105 form the FHA domain; it reads NVVGRSPDCSVALPFPSISKQHAVIEISAWNKAPILQDCGSLNGTQIVKPPR. A Phosphothreonine modification is found at Thr-146. Disordered stretches follow at residues 156–394, 409–634, and 714–744; these read RSQN…EEVS, LWSG…KHAK, and ETSEPIDTHEAHGSQPSLPGEPPGHQHPVPT. Ser-168 and Ser-176 each carry phosphoserine. The segment covering 179–192 has biased composition (polar residues); sequence SVANGSRNTASPSA. A phosphoserine mark is found at Ser-198 and Ser-220. Thr-222 carries the post-translational modification Phosphothreonine. Residues 264–277 are compositionally biased toward basic and acidic residues; it reads TKDKFKDTKMKEEA. Over residues 278 to 292 the composition is skewed to low complexity; sequence GSAGVPVGSVVEGSP. Ser-298 carries the phosphoserine modification. Position 300 is a phosphothreonine (Thr-300). Ser-314 is modified (phosphoserine). Position 316 is a phosphothreonine (Thr-316). 2 positions are modified to phosphoserine: Ser-350 and Ser-354. Thr-356 carries the phosphothreonine modification. Phosphoserine is present on residues Ser-372 and Ser-380. Over residues 381–393 the composition is skewed to acidic residues; sequence DTDEEERGEEEEV. The residue at position 382 (Thr-382) is a Phosphothreonine. Phosphoserine is present on residues Ser-394, Ser-411, Ser-421, Ser-434, and Ser-438. A compositionally biased stretch (polar residues) spans 421-435; sequence SQPQVLVERSQSASG. The residue at position 440 (Thr-440) is a Phosphothreonine. Ser-457 bears the Phosphoserine mark. Thr-466 carries the post-translational modification Phosphothreonine. Ser-488, Ser-489, Ser-550, Ser-587, and Ser-589 each carry phosphoserine. The segment covering 545–561 has biased composition (polar residues); the sequence is QEGSSSPVADIRMSQQP. Over residues 620–634 the composition is skewed to basic and acidic residues; the sequence is GREREAHVGGTKHAK. Residues Ser-730 and Ser-745 each carry the phosphoserine modification. The residue at position 764 (Lys-764) is an N6-acetyllysine. The segment at 772–1086 is disordered; the sequence is QMMPDGKASG…TKPNQEAAAP (315 aa). Ser-793, Ser-801, and Ser-824 each carry phosphoserine. Positions 798 to 817 are enriched in low complexity; it reads ASASPQSLLTSQSQKQSTPQ. 3 stretches are compositionally biased toward polar residues: residues 862–889, 901–929, and 942–956; these read TCPTNQPAASRPTSRPTRGRANRSSTRT, QPSTSTEQPGIPNLTSQVTEGRAHSTSVN, and PLTSAEQSVTSNLNP. Thr-889 is modified (phosphothreonine). The residue at position 951 (Thr-951) is a Phosphothreonine. A Glycyl lysine isopeptide (Lys-Gly) (interchain with G-Cter in SUMO2) cross-link involves residue Lys-991. The span at 994-1014 shows a compositional bias: low complexity; the sequence is STPAEPEPQSSASQSSGASEA. A phosphoserine mark is found at Ser-1008, Ser-1009, Ser-1012, and Ser-1016. Positions 1032 to 1047 are enriched in basic and acidic residues; sequence VVKEEDPGEIQVKEEP. Residue Lys-1034 forms a Glycyl lysine isopeptide (Lys-Gly) (interchain with G-Cter in SUMO1); alternate linkage. Lys-1034 participates in a covalent cross-link: Glycyl lysine isopeptide (Lys-Gly) (interchain with G-Cter in SUMO2); alternate. Thr-1054 is modified (phosphothreonine). BRCT domains lie at 1085–1163 and 1184–1275; these read APKV…DYLV and RERR…FVLS.

In terms of assembly, homodimer. Interacts with H2AX, which requires phosphorylation of H2AX on 'Ser-139'. Interacts with the MRN complex, composed of MRE11, RAD50, and NBN. Interacts with CHEK2, which requires ATM-mediated phosphorylation of 'Thr-68' within the FHA domain of CHEK2. Interacts constitutively with the BRCA1-BARD1 complex, SMC1A and TP53BP1. Interacts with ATM and FANCD2, and these interactions are reduced upon DNA damage. Also interacts with the PRKDC complex, composed of XRCC6/KU70, XRCC5/KU80 and PRKDC/XRCC7. This interaction may be required for PRKDC autophosphorylation, which is essential for DNA double strand break (DSB) repair. When phosphorylated by ATM, interacts with RNF8 (via FHA domain). Interacts with CEP164. When phosphorylated, interacts with APTX (via FHA-like domain). Interacts (when phosphorylated) with TOPBP1; promoting TOPBP1 localization to DNA damage sites during mitosis. Interacts (when phosphorylated) with NBN; promoting NBN and MRN complex localization to DNA damage sites. In terms of processing, phosphorylated upon exposure to ionizing radiation (IR), ultraviolet radiation (UV), and hydroxyurea (HU). Phosphorylation in response to IR requires ATM, NBN, and possibly CHEK2. Also phosphorylated during the G2/M phase of the cell cycle and during activation of the mitotic spindle checkpoint. Phosphorylation at Thr-4 by ATM stabilizes and enhances homodimerization via the FHA domain. Phosphorylated at Ser-168 and Ser-198 by CK2 in response to DNA damage during mitosis, promoting interaction with TOPBP1. Phosphorylated by CK2 in response to DNA damage, promoting interaction with NBN and recruitment of the MRN complex to DNA damage sites. Sumoylation at Lys-1034 by PIAS4 following DNA damage promotes ubiquitin-mediated degradation. Post-translationally, ubiquitinated by RNF4, leading to proteasomal degradation; undergoes 'Lys-48'-linked polyubiquitination.

The protein localises to the nucleus. It is found in the chromosome. Its function is as follows. Histone reader protein required for checkpoint-mediated cell cycle arrest in response to DNA damage within both the S phase and G2/M phases of the cell cycle. Specifically recognizes and binds histone H2AX phosphorylated at 'Ser-139', a marker of DNA damage, serving as a scaffold for the recruitment of DNA repair and signal transduction proteins to discrete foci of DNA damage sites. Also required for downstream events subsequent to the recruitment of these proteins. These include phosphorylation and activation of the ATM, CHEK1 and CHEK2 kinases, and stabilization of TP53/p53 and apoptosis. ATM and CHEK2 may also be activated independently by a parallel pathway mediated by TP53BP1. Required for chromosomal stability during mitosis by promoting recruitment of TOPBP1 to DNA double strand breaks (DSBs): TOPBP1 forms filamentous assemblies that bridge MDC1 and tether broken chromosomes during mitosis. Required for the repair of DSBs via homologous recombination by promoting recruitment of NBN component of the MRN complex to DSBs. The polypeptide is Mediator of DNA damage checkpoint protein 1 (Mdc1) (Rattus norvegicus (Rat)).